We begin with the raw amino-acid sequence, 211 residues long: Histidine biosynthesis bifunctional protein HisIE (211 aa).

Residues methionine 1–isoleucine 118 form a phosphoribosyl-AMP cyclohydrolase region. The phosphoribosyl-ATP pyrophosphohydrolase stretch occupies residues isoleucine 119–glutamate 211.

This sequence in the N-terminal section; belongs to the PRA-CH family. The protein in the C-terminal section; belongs to the PRA-PH family.

It localises to the cytoplasm. The enzyme catalyses 1-(5-phospho-beta-D-ribosyl)-ATP + H2O = 1-(5-phospho-beta-D-ribosyl)-5'-AMP + diphosphate + H(+). It catalyses the reaction 1-(5-phospho-beta-D-ribosyl)-5'-AMP + H2O = 1-(5-phospho-beta-D-ribosyl)-5-[(5-phospho-beta-D-ribosylamino)methylideneamino]imidazole-4-carboxamide. The protein operates within amino-acid biosynthesis; L-histidine biosynthesis; L-histidine from 5-phospho-alpha-D-ribose 1-diphosphate: step 2/9. It participates in amino-acid biosynthesis; L-histidine biosynthesis; L-histidine from 5-phospho-alpha-D-ribose 1-diphosphate: step 3/9. The protein is Histidine biosynthesis bifunctional protein HisIE (hisI) of Halalkalibacterium halodurans (strain ATCC BAA-125 / DSM 18197 / FERM 7344 / JCM 9153 / C-125) (Bacillus halodurans).